Consider the following 213-residue polypeptide: Thymidylate kinase (213 aa).

11–18 (GPDGAGKT) provides a ligand contact to ATP.

Belongs to the thymidylate kinase family.

The enzyme catalyses dTMP + ATP = dTDP + ADP. Its function is as follows. Phosphorylation of dTMP to form dTDP in both de novo and salvage pathways of dTTP synthesis. The chain is Thymidylate kinase from Oenococcus oeni (strain ATCC BAA-331 / PSU-1).